Reading from the N-terminus, the 283-residue chain is 2-dehydro-3-deoxyphosphooctonate aldolase (283 aa).

The protein belongs to the KdsA family.

The protein localises to the cytoplasm. It catalyses the reaction D-arabinose 5-phosphate + phosphoenolpyruvate + H2O = 3-deoxy-alpha-D-manno-2-octulosonate-8-phosphate + phosphate. Its pathway is carbohydrate biosynthesis; 3-deoxy-D-manno-octulosonate biosynthesis; 3-deoxy-D-manno-octulosonate from D-ribulose 5-phosphate: step 2/3. It participates in bacterial outer membrane biogenesis; lipopolysaccharide biosynthesis. The sequence is that of 2-dehydro-3-deoxyphosphooctonate aldolase from Laribacter hongkongensis (strain HLHK9).